The primary structure comprises 303 residues: Sulfate adenylyltransferase subunit 2 (303 aa).

This sequence belongs to the PAPS reductase family. CysD subfamily. As to quaternary structure, heterodimer composed of CysD, the smaller subunit, and CysN.

It catalyses the reaction sulfate + ATP + H(+) = adenosine 5'-phosphosulfate + diphosphate. Its pathway is sulfur metabolism; hydrogen sulfide biosynthesis; sulfite from sulfate: step 1/3. Its function is as follows. With CysN forms the ATP sulfurylase (ATPS) that catalyzes the adenylation of sulfate producing adenosine 5'-phosphosulfate (APS) and diphosphate, the first enzymatic step in sulfur assimilation pathway. APS synthesis involves the formation of a high-energy phosphoric-sulfuric acid anhydride bond driven by GTP hydrolysis by CysN coupled to ATP hydrolysis by CysD. The chain is Sulfate adenylyltransferase subunit 2 from Akkermansia muciniphila (strain ATCC BAA-835 / DSM 22959 / JCM 33894 / BCRC 81048 / CCUG 64013 / CIP 107961 / Muc).